We begin with the raw amino-acid sequence, 326 residues long: uncharacterized protein (326 aa).

This sequence to B.subtilis XkdQ.

This is an uncharacterized protein from Bacillus subtilis (strain 168).